Consider the following 370-residue polypeptide: MVGKLKQNLLLACLVISSVTVFYLGQHAMECHHRIEERSQPARLENPKATVRAGLDIKANKTFTYHKDMPLIFIGGVPRSGTTLMRAMLDAHPDIRCGEETRVIPRILALKQMWSRSSKEKIRLDEAGVTDEVLDSAMQAFLLEVIVKHGEPAPYLCNKDPFALKSLTYLARLFPNAKFLLMVRDGRASVHSMISRKVTIAGFDLNSYRDCLTKWNRAIETMYNQCMEVGYKKCMLVHYEQLVLHPERWMRTLLKFLHIPWNHSVLHHEEMIGKAGGVSLSKVERSTDQVIKPVNVGALSKWVGKIPPDVLQDMAVIAPMLAKLGYDPYANPPNYGKPDPKILENTRRVYKGEFQLPDFLKEKPQTEQVE.

At 1 to 8 the chain is on the cytoplasmic side; it reads MVGKLKQN. A helical; Signal-anchor for type II membrane protein transmembrane segment spans residues 9–25; that stretch reads LLLACLVISSVTVFYLG. Residues 26–370 are Lumenal-facing; that stretch reads QHAMECHHRI…KEKPQTEQVE (345 aa). N-linked (GlcNAc...) asparagine glycosylation occurs at asparagine 60. 79–83 contributes to the 3'-phosphoadenylyl sulfate binding site; the sequence is RSGTT. A disulfide bridge links cysteine 97 with cysteine 157. Catalysis depends on glutamate 100, which acts as the Proton donor/acceptor. The interval 102 to 106 is interaction with peptide substrate; the sequence is RVIPR. 3'-phosphoadenylyl sulfate contacts are provided by arginine 184, serine 192, and arginine 196. The cysteines at positions 226 and 234 are disulfide-linked. Position 239 (tyrosine 239) interacts with 3'-phosphoadenylyl sulfate. N-linked (GlcNAc...) asparagine glycosylation is present at asparagine 262. Residues 286–295 and lysine 301 each bind 3'-phosphoadenylyl sulfate; that span reads STDQVIKPVN.

The protein belongs to the protein sulfotransferase family. Homodimer. Can also form heterodimers with TPST2. Post-translationally, N-glycosylated. Ubiquitous. Detected in heart, brain, lung, liver, spleen, kidney, skeletal muscle and testis.

The protein resides in the golgi apparatus membrane. The enzyme catalyses L-tyrosyl-[protein] + 3'-phosphoadenylyl sulfate = O-sulfo-L-tyrosine-[protein] + adenosine 3',5'-bisphosphate + H(+). Catalyzes the O-sulfation of tyrosine residues within acidic motifs of polypeptides, using 3'-phosphoadenylyl sulfate (PAPS) as cosubstrate. This is Protein-tyrosine sulfotransferase 1 (Tpst1) from Mus musculus (Mouse).